A 304-amino-acid chain; its full sequence is HTH-type transcriptional activator CmpR (304 aa).

Positions 1-61 constitute an HTH lysR-type domain; sequence MKNATLHQFE…EQIGRKIYLT (61 aa). A DNA-binding region (H-T-H motif) is located at residues 21–40; that stretch reads FTKAAEELFLTQPTVSQQMK.

Belongs to the LysR transcriptional regulatory family.

It is found in the cytoplasm. Its function is as follows. Activates transcription of the cmpABCD operon under carbon dioxide-limited conditions. Specifically binds to the cmpR-cmpA intergenic region. The protein is HTH-type transcriptional activator CmpR (cmpR) of Synechocystis sp. (strain ATCC 27184 / PCC 6803 / Kazusa).